The sequence spans 335 residues: Methionine import ATP-binding protein MetN 2 (335 aa).

In terms of domain architecture, ABC transporter spans 2–242; it reads IEFHNVHKTY…PQHSTTKRFV (241 aa). An ATP-binding site is contributed by 38-45; that stretch reads GHSGAGKS.

It belongs to the ABC transporter superfamily. Methionine importer (TC 3.A.1.24) family. The complex is composed of two ATP-binding proteins (MetN), two transmembrane proteins (MetI) and a solute-binding protein (MetQ).

It is found in the cell inner membrane. It carries out the reaction L-methionine(out) + ATP + H2O = L-methionine(in) + ADP + phosphate + H(+). The catalysed reaction is D-methionine(out) + ATP + H2O = D-methionine(in) + ADP + phosphate + H(+). Functionally, part of the ABC transporter complex MetNIQ involved in methionine import. Responsible for energy coupling to the transport system. This Pseudomonas syringae pv. tomato (strain ATCC BAA-871 / DC3000) protein is Methionine import ATP-binding protein MetN 2.